The primary structure comprises 130 residues: Small ribosomal subunit protein uS9 (130 aa).

The protein belongs to the universal ribosomal protein uS9 family.

This Aromatoleum aromaticum (strain DSM 19018 / LMG 30748 / EbN1) (Azoarcus sp. (strain EbN1)) protein is Small ribosomal subunit protein uS9.